A 398-amino-acid polypeptide reads, in one-letter code: Cyclin-dependent kinase D-1 (398 aa).

Positions 11–291 (YLKREVLGQG…IQQALKHRYF (281 aa)) constitute a Protein kinase domain. ATP is bound by residues 17-25 (LGQGTYGVV) and K40. Y22 is modified (phosphotyrosine). D133 functions as the Proton acceptor in the catalytic mechanism. Phosphoserine is present on S160. T166 is modified (phosphothreonine). The tract at residues 296–318 (SPTDPLKLPRPVSKQDAKSSDSK) is disordered. A compositionally biased stretch (basic and acidic residues) spans 308 to 318 (SKQDAKSSDSK).

The protein belongs to the protein kinase superfamily. CMGC Ser/Thr protein kinase family. CDC2/CDKX subfamily. Autophosphorylated. As to expression, expressed at low levels in suspension cell culture, but not in plant organs.

The protein resides in the nucleus. The catalysed reaction is L-seryl-[protein] + ATP = O-phospho-L-seryl-[protein] + ADP + H(+). It catalyses the reaction L-threonyl-[protein] + ATP = O-phospho-L-threonyl-[protein] + ADP + H(+). It carries out the reaction [DNA-directed RNA polymerase] + ATP = phospho-[DNA-directed RNA polymerase] + ADP + H(+). The chain is Cyclin-dependent kinase D-1 (CDKD-1) from Arabidopsis thaliana (Mouse-ear cress).